The following is a 110-amino-acid chain: Phosphoribosyl-ATP pyrophosphatase (110 aa).

Belongs to the PRA-PH family.

The protein localises to the cytoplasm. The catalysed reaction is 1-(5-phospho-beta-D-ribosyl)-ATP + H2O = 1-(5-phospho-beta-D-ribosyl)-5'-AMP + diphosphate + H(+). The protein operates within amino-acid biosynthesis; L-histidine biosynthesis; L-histidine from 5-phospho-alpha-D-ribose 1-diphosphate: step 2/9. The polypeptide is Phosphoribosyl-ATP pyrophosphatase (Clostridium novyi (strain NT)).